A 92-amino-acid chain; its full sequence is RNA-binding protein Hfq (92 aa).

The region spanning 9-68 (DPFLNALRRERVPVSVYLVNGIKLQGTIESFDQFVVLLRNTVSQMVYKHAISTVVPARNV) is the Sm domain. The segment at 72–92 (PGGGYVQSNENNQAEDDDVEQ) is disordered.

It belongs to the Hfq family. In terms of assembly, homohexamer.

RNA chaperone that binds small regulatory RNA (sRNAs) and mRNAs to facilitate mRNA translational regulation in response to envelope stress, environmental stress and changes in metabolite concentrations. Also binds with high specificity to tRNAs. The protein is RNA-binding protein Hfq of Xanthomonas campestris pv. campestris (strain 8004).